The chain runs to 411 residues: Probable protein S-acyltransferase 2 (411 aa).

2 consecutive transmembrane segments (helical) span residues 56–76 and 85–105; these read LTTAMIGGPALTFCIRMVFLI and SLILLGALLLTVLDFTFLFLT. Residues 160 to 210 form the DHHC domain; the sequence is KFCDTCLLYRPPRASHCSICNNCVQRFDHHCPWVGQCIALRNYPYFICFIS. Catalysis depends on Cys190, which acts as the S-palmitoyl cysteine intermediate. Helical transmembrane passes span 205-225 and 245-265; these read FICFISTSTLLCLYVFVFSWV and FVVLILYCFVVVWFVGGLTVF. Residue Ser405 is modified to Phosphoserine.

The protein belongs to the DHHC palmitoyltransferase family. As to expression, expressed in flowers and pollen.

It localises to the cytoplasmic vesicle membrane. The enzyme catalyses L-cysteinyl-[protein] + hexadecanoyl-CoA = S-hexadecanoyl-L-cysteinyl-[protein] + CoA. Palmitoyl acyltransferase. This chain is Probable protein S-acyltransferase 2 (PAT02), found in Arabidopsis thaliana (Mouse-ear cress).